Consider the following 77-residue polypeptide: U8-lycotoxin-Ls1m (77 aa).

A signal peptide spans 1–20 (MKLMIFTGLFLFAIVSLIEA). The propeptide occupies 21–26 (QAENEK).

The protein belongs to the neurotoxin 19 (CSTX) family. 08 (U8-Lctx) subfamily. Post-translationally, contains 4 disulfide bonds. In terms of tissue distribution, expressed by the venom gland.

It localises to the secreted. In Lycosa singoriensis (Wolf spider), this protein is U8-lycotoxin-Ls1m.